We begin with the raw amino-acid sequence, 137 residues long: Basic phospholipase A2 homolog Ts-R6 (137 aa).

Positions 1-16 are cleaved as a signal peptide; that stretch reads MRTLWIMAVLLLGVEG. Cystine bridges form between cysteine 42-cysteine 130, cysteine 44-cysteine 60, cysteine 59-cysteine 110, cysteine 65-cysteine 137, cysteine 66-cysteine 103, cysteine 73-cysteine 97, and cysteine 91-cysteine 101.

In terms of tissue distribution, expressed by the venom gland.

It localises to the secreted. Snake venom phospholipase A2 homolog that induces local edema a few hours after injection (5-10 ug) in the hind paw and shows weak anticoagulant and myotoxic activities. The chain is Basic phospholipase A2 homolog Ts-R6 from Trimeresurus stejnegeri (Chinese green tree viper).